A 209-amino-acid chain; its full sequence is Potassium-transporting ATPase KdpC subunit (209 aa).

Residues 10-30 (VISLVFLFVLGFLFPTVTSLI) form a helical membrane-spanning segment.

This sequence belongs to the KdpC family. The system is composed of three essential subunits: KdpA, KdpB and KdpC.

It localises to the cell membrane. Functionally, part of the high-affinity ATP-driven potassium transport (or Kdp) system, which catalyzes the hydrolysis of ATP coupled with the electrogenic transport of potassium into the cytoplasm. This subunit acts as a catalytic chaperone that increases the ATP-binding affinity of the ATP-hydrolyzing subunit KdpB by the formation of a transient KdpB/KdpC/ATP ternary complex. In Thermoplasma volcanium (strain ATCC 51530 / DSM 4299 / JCM 9571 / NBRC 15438 / GSS1), this protein is Potassium-transporting ATPase KdpC subunit.